The primary structure comprises 81 residues: Putative membrane protein insertion efficiency factor 1 (81 aa).

It belongs to the UPF0161 family.

Its subcellular location is the cell membrane. Its function is as follows. Could be involved in insertion of integral membrane proteins into the membrane. This Bacillus licheniformis (strain ATCC 14580 / DSM 13 / JCM 2505 / CCUG 7422 / NBRC 12200 / NCIMB 9375 / NCTC 10341 / NRRL NRS-1264 / Gibson 46) protein is Putative membrane protein insertion efficiency factor 1.